We begin with the raw amino-acid sequence, 153 residues long: Gastric inhibitory polypeptide (153 aa).

The first 21 residues, 1–21, serve as a signal peptide directing secretion; sequence MVATKTFALLLLSLFLAVGLG. Propeptides lie at residues 22-50 and 95-153; these read EKKEGHFSALPSLPVGSHAKVSSPQPRGP and EARA…LRSR. The segment at 102-125 is disordered; it reads ASQANRKEEEAVEPQSSPAKNPSD.

Belongs to the glucagon family.

It is found in the secreted. Potent stimulator of insulin secretion and relatively poor inhibitor of gastric acid secretion. The sequence is that of Gastric inhibitory polypeptide (GIP) from Homo sapiens (Human).